The sequence spans 1132 residues: Eisosome protein SEG2 (1132 aa).

Residues 76–95 (KRTSSLPNQGHKNTSNNSAG) are compositionally biased toward polar residues. Disordered regions lie at residues 76-142 (KRTS…GNSG) and 171-225 (RYSL…NDYH). Over residues 101–113 (AHEDAETTFREFG) the composition is skewed to basic and acidic residues. Over residues 115 to 142 (KQSSKVLNISSSTGQNSKSRTTSLGNSG) the composition is skewed to polar residues. Ser137 bears the Phosphoserine mark. A compositionally biased stretch (basic and acidic residues) spans 208-225 (GSQEKKSESGGKSKNDYH). At Ser280 the chain carries Phosphoserine. The tract at residues 404–429 (PTLSEPKPAYVPPEDVEKEPSTLSNQ) is disordered. Phosphoserine occurs at positions 504 and 507. Disordered regions lie at residues 510-938 (GGNQ…FRSM) and 961-993 (EKKE…THTT). Residue Lys526 forms a Glycyl lysine isopeptide (Lys-Gly) (interchain with G-Cter in ubiquitin) linkage. 2 stretches are compositionally biased toward acidic residues: residues 550 to 561 (DQEEALSDNEPE) and 595 to 644 (KDDD…DDEY). Ser556 is subject to Phosphoserine. 2 stretches are compositionally biased toward polar residues: residues 688–699 (SENAEVSQSGTN) and 710–735 (YLTN…TDTT). Lys743 participates in a covalent cross-link: Glycyl lysine isopeptide (Lys-Gly) (interchain with G-Cter in ubiquitin). Low complexity predominate over residues 761–773 (SSTSSSIYSIETS). Polar residues-rich tracts occupy residues 774–810 (PNID…SSHQ) and 827–845 (NRSC…TLSH). Residues 850 to 860 (PASDSSSSPPY) are compositionally biased toward low complexity. Over residues 916–930 (PPARKSSFEKERPAK) the composition is skewed to basic and acidic residues. Residues Ser980 and Ser1022 each carry the phosphoserine modification.

Belongs to the SEG1 family. As to quaternary structure, component of eisosomes, large cytoplasmic protein assemblies that localize to specialized domains termed MCCs on the plasma membrane.

The protein resides in the cell membrane. Likely plays only a minor role in eisosome assembly. This is Eisosome protein SEG2 (SEG2) from Saccharomyces cerevisiae (strain ATCC 204508 / S288c) (Baker's yeast).